Here is a 103-residue protein sequence, read N- to C-terminus: Large ribosomal subunit protein uL24 (103 aa).

Belongs to the universal ribosomal protein uL24 family. In terms of assembly, part of the 50S ribosomal subunit.

Functionally, one of two assembly initiator proteins, it binds directly to the 5'-end of the 23S rRNA, where it nucleates assembly of the 50S subunit. In terms of biological role, one of the proteins that surrounds the polypeptide exit tunnel on the outside of the subunit. The sequence is that of Large ribosomal subunit protein uL24 from Christiangramia forsetii (strain DSM 17595 / CGMCC 1.15422 / KT0803) (Gramella forsetii).